The primary structure comprises 101 residues: Protein Tat (101 aa).

Residues Met1–Pro10 are compositionally biased toward basic and acidic residues. The segment at Met1–Thr20 is disordered. Residues Met1–Asn24 are interaction with human CREBBP. A transactivation region spans residues Met1–Gly48. 3 residues coordinate Zn(2+): Cys22, Cys25, and Cys27. Residues Cys22–Cys37 are cysteine-rich. The residue at position 28 (Lys28) is an N6-acetyllysine; by host PCAF. Positions 30, 33, 34, and 37 each coordinate Zn(2+). The core stretch occupies residues Phe38–Gly48. The segment covering Gly48 to Thr58 has biased composition (basic residues). Residues Gly48–Asp101 are disordered. The short motif at Arg49–Arg57 is the Nuclear localization signal, RNA-binding (TAR), and protein transduction element. An interaction with the host capping enzyme RNGTT region spans residues Arg49–Lys86. An N6-acetyllysine; by host EP300 and GCN5L2 mark is found at Lys50 and Lys51. The residue at position 52 (Arg52) is an Asymmetric dimethylarginine; by host PRMT6. Over residues Lys86–Asp101 the composition is skewed to basic and acidic residues.

Belongs to the lentiviruses Tat family. Interacts with host CCNT1. Associates with the P-TEFb complex composed at least of Tat, P-TEFb (CDK9 and CCNT1), TAR RNA, RNA Pol II. Recruits the HATs CREBBP, TAF1/TFIID, EP300, PCAF and GCN5L2. Interacts with host KAT5/Tip60; this interaction targets the latter to degradation. Interacts with the host deacetylase SIRT1. Interacts with host capping enzyme RNGTT; this interaction stimulates RNGTT. Binds to host KDR, and to the host integrins ITGAV/ITGB3 and ITGA5/ITGB1. Interacts with host KPNB1/importin beta-1 without previous binding to KPNA1/importin alpha-1. Interacts with EIF2AK2. Interacts with host nucleosome assembly protein NAP1L1; this interaction may be required for the transport of Tat within the nucleus, since the two proteins interact at the nuclear rim. Interacts with host C1QBP/SF2P32; this interaction involves lysine-acetylated Tat. Interacts with the host chemokine receptors CCR2, CCR3 and CXCR4. Interacts with host DPP4/CD26; this interaction may trigger an anti-proliferative effect. Interacts with host LDLR. Interacts with the host extracellular matrix metalloproteinase MMP1. Interacts with host PRMT6; this interaction mediates Tat's methylation. Interacts with, and is ubiquitinated by MDM2/Hdm2. Interacts with host PSMC3 and HTATIP2. Interacts with STAB1; this interaction may overcome SATB1-mediated repression of IL2 and IL2RA (interleukin) in T cells by binding to the same domain than HDAC1. Interacts (when acetylated) with human CDK13, thereby increasing HIV-1 mRNA splicing and promoting the production of the doubly spliced HIV-1 protein Nef. Interacts with host TBP; this interaction modulates the activity of transcriptional pre-initiation complex. Interacts with host RELA. Interacts with host PLSCR1; this interaction negatively regulates Tat transactivation activity by altering its subcellular distribution. Post-translationally, asymmetrical arginine methylation by host PRMT6 seems to diminish the transactivation capacity of Tat and affects the interaction with host CCNT1. In terms of processing, acetylation by EP300, CREBBP, GCN5L2/GCN5 and PCAF regulates the transactivation activity of Tat. EP300-mediated acetylation of Lys-50 promotes dissociation of Tat from the TAR RNA through the competitive binding to PCAF's bromodomain. In addition, the non-acetylated Tat's N-terminus can also interact with PCAF. PCAF-mediated acetylation of Lys-28 enhances Tat's binding to CCNT1. Lys-50 is deacetylated by SIRT1. Polyubiquitination by host MDM2 does not target Tat to degradation, but activates its transactivation function and fosters interaction with CCNT1 and TAR RNA. Post-translationally, phosphorylated by EIF2AK2 on serine and threonine residues adjacent to the basic region important for TAR RNA binding and function. Phosphorylation of Tat by EIF2AK2 is dependent on the prior activation of EIF2AK2 by dsRNA.

The protein resides in the host nucleus. The protein localises to the host nucleolus. It is found in the host cytoplasm. Its subcellular location is the secreted. Functionally, transcriptional activator that increases RNA Pol II processivity, thereby increasing the level of full-length viral transcripts. Recognizes a hairpin structure at the 5'-LTR of the nascent viral mRNAs referred to as the transactivation responsive RNA element (TAR) and recruits the cyclin T1-CDK9 complex (P-TEFb complex) that will in turn hyperphosphorylate the RNA polymerase II to allow efficient elongation. The CDK9 component of P-TEFb and other Tat-activated kinases hyperphosphorylate the C-terminus of RNA Pol II that becomes stabilized and much more processive. Other factors such as HTATSF1/Tat-SF1, SUPT5H/SPT5, and HTATIP2 are also important for Tat's function. Besides its effect on RNA Pol II processivity, Tat induces chromatin remodeling of proviral genes by recruiting the histone acetyltransferases (HATs) CREBBP, EP300 and PCAF to the chromatin. This also contributes to the increase in proviral transcription rate, especially when the provirus integrates in transcriptionally silent region of the host genome. To ensure maximal activation of the LTR, Tat mediates nuclear translocation of NF-kappa-B by interacting with host RELA. Through its interaction with host TBP, Tat may also modulate transcription initiation. Tat can reactivate a latently infected cell by penetrating in it and transactivating its LTR promoter. In the cytoplasm, Tat is thought to act as a translational activator of HIV-1 mRNAs. Extracellular circulating Tat can be endocytosed by surrounding uninfected cells via the binding to several surface receptors such as CD26, CXCR4, heparan sulfate proteoglycans (HSPG) or LDLR. Neurons are rarely infected, but they internalize Tat via their LDLR. Through its interaction with nuclear HATs, Tat is potentially able to control the acetylation-dependent cellular gene expression. Modulates the expression of many cellular genes involved in cell survival, proliferation or in coding for cytokines or cytokine receptors. Tat plays a role in T-cell and neurons apoptosis. Tat induced neurotoxicity and apoptosis probably contribute to neuroAIDS. Circulating Tat also acts as a chemokine-like and/or growth factor-like molecule that binds to specific receptors on the surface of the cells, affecting many cellular pathways. In the vascular system, Tat binds to ITGAV/ITGB3 and ITGA5/ITGB1 integrins dimers at the surface of endothelial cells and competes with bFGF for heparin-binding sites, leading to an excess of soluble bFGF. The sequence is that of Protein Tat from Homo sapiens (Human).